The primary structure comprises 317 residues: MHNYLDFEKPISDLEGKIHELKKLASEDESIDTSDEVGRLEIRVRESMADIYSKLNAWQKTQVARHPQRPHFVDYAKALFTEFTPLAGDRKFSEDAAIQAGFARFRGQPVAVLGQEKGNDTKSRLKHNFGSARPEGYRKAIRILEMADRFQLPVITLVDTAGAYPGVGAEERGQAEAIARSTEMCLGLKVPIISVVIGEGGSGGAIAIAVGNRVYMLEHSIYSVISPEGAASILWRDSTRAKEAATNMKITAEDLKGLGIIDGIIPEPLGGAHRDPQTVIAAAGDVISNALGELSSRSGEQLRSDRRQKFLNMGRNL.

Positions 43–293 constitute a CoA carboxyltransferase C-terminal domain; sequence RVRESMADIY…GDVISNALGE (251 aa).

It belongs to the AccA family. In terms of assembly, acetyl-CoA carboxylase is a heterohexamer composed of biotin carboxyl carrier protein (AccB), biotin carboxylase (AccC) and two subunits each of ACCase subunit alpha (AccA) and ACCase subunit beta (AccD).

Its subcellular location is the cytoplasm. It carries out the reaction N(6)-carboxybiotinyl-L-lysyl-[protein] + acetyl-CoA = N(6)-biotinyl-L-lysyl-[protein] + malonyl-CoA. It participates in lipid metabolism; malonyl-CoA biosynthesis; malonyl-CoA from acetyl-CoA: step 1/1. Component of the acetyl coenzyme A carboxylase (ACC) complex. First, biotin carboxylase catalyzes the carboxylation of biotin on its carrier protein (BCCP) and then the CO(2) group is transferred by the carboxyltransferase to acetyl-CoA to form malonyl-CoA. This Rhizobium rhizogenes (strain K84 / ATCC BAA-868) (Agrobacterium radiobacter) protein is Acetyl-coenzyme A carboxylase carboxyl transferase subunit alpha.